Consider the following 237-residue polypeptide: Phosphoribosylaminoimidazole-succinocarboxamide synthase (237 aa).

Belongs to the SAICAR synthetase family.

The catalysed reaction is 5-amino-1-(5-phospho-D-ribosyl)imidazole-4-carboxylate + L-aspartate + ATP = (2S)-2-[5-amino-1-(5-phospho-beta-D-ribosyl)imidazole-4-carboxamido]succinate + ADP + phosphate + 2 H(+). It functions in the pathway purine metabolism; IMP biosynthesis via de novo pathway; 5-amino-1-(5-phospho-D-ribosyl)imidazole-4-carboxamide from 5-amino-1-(5-phospho-D-ribosyl)imidazole-4-carboxylate: step 1/2. This is Phosphoribosylaminoimidazole-succinocarboxamide synthase from Listeria welshimeri serovar 6b (strain ATCC 35897 / DSM 20650 / CCUG 15529 / CIP 8149 / NCTC 11857 / SLCC 5334 / V8).